The sequence spans 346 residues: Acetylserotonin O-methyltransferase (346 aa).

Residues Y148, W165, D211, 236–238 (GDF), and K253 contribute to the S-adenosyl-L-methionine site. The active-site Proton donor/acceptor is the H256. Substrate is bound by residues D257, N303, and Q307.

Belongs to the class I-like SAM-binding methyltransferase superfamily. Cation-independent O-methyltransferase family. As to quaternary structure, homodimer. As to expression, expressed in pineal gland and retina.

The enzyme catalyses N-acetylserotonin + S-adenosyl-L-methionine = melatonin + S-adenosyl-L-homocysteine + H(+). Its pathway is aromatic compound metabolism; melatonin biosynthesis; melatonin from serotonin: step 1/2. Functionally, catalyzes the transfer of a methyl group onto N-acetylserotonin, producing melatonin (N-acetyl-5-methoxytryptamine). This chain is Acetylserotonin O-methyltransferase (ASMT), found in Gallus gallus (Chicken).